Here is a 441-residue protein sequence, read N- to C-terminus: 5-methylthioadenosine/S-adenosylhomocysteine deaminase (441 aa).

Zn(2+) contacts are provided by H70 and H72. 2 residues coordinate substrate: E99 and H191. H218 serves as a coordination point for Zn(2+). Positions 221 and 306 each coordinate substrate. Position 306 (D306) interacts with Zn(2+).

Belongs to the metallo-dependent hydrolases superfamily. MTA/SAH deaminase family. It depends on Zn(2+) as a cofactor.

It carries out the reaction S-adenosyl-L-homocysteine + H2O + H(+) = S-inosyl-L-homocysteine + NH4(+). The catalysed reaction is S-methyl-5'-thioadenosine + H2O + H(+) = S-methyl-5'-thioinosine + NH4(+). In terms of biological role, catalyzes the deamination of 5-methylthioadenosine and S-adenosyl-L-homocysteine into 5-methylthioinosine and S-inosyl-L-homocysteine, respectively. Is also able to deaminate adenosine. This chain is 5-methylthioadenosine/S-adenosylhomocysteine deaminase, found in Lawsonia intracellularis (strain PHE/MN1-00).